A 1486-amino-acid chain; its full sequence is Chromosome partition protein MukB (1486 aa).

34 to 41 (GGNGAGKS) contributes to the ATP binding site. Coiled-coil stretches lie at residues 326–418 (LEAD…QYNQ), 444–480 (LETFQAKELEATEKMLSLEQKMSMAQTAHSQFEQAYQ), and 509–603 (RHLA…RAPV). Residues 666 to 783 (PGGSEDQRLN…EVPLFGRAAR (118 aa)) form a flexible hinge region. Coiled-coil stretches lie at residues 835–923 (EAEI…AKLE), 977–1115 (EMLS…TAKA), and 1209–1266 (VEAI…QNVS).

This sequence belongs to the SMC family. MukB subfamily. As to quaternary structure, homodimerization via its hinge domain. Binds to DNA via its C-terminal region. Interacts, and probably forms a ternary complex, with MukE and MukF via its C-terminal region. The complex formation is stimulated by calcium or magnesium. Interacts with tubulin-related protein FtsZ.

It localises to the cytoplasm. Its subcellular location is the nucleoid. In terms of biological role, plays a central role in chromosome condensation, segregation and cell cycle progression. Functions as a homodimer, which is essential for chromosome partition. Involved in negative DNA supercoiling in vivo, and by this means organize and compact chromosomes. May achieve or facilitate chromosome segregation by condensation DNA from both sides of a centrally located replisome during cell division. This is Chromosome partition protein MukB from Escherichia coli O6:K15:H31 (strain 536 / UPEC).